The sequence spans 431 residues: MAEGYREYRDKVLGFIEDHENWRKHTINLIASENVTSPSVTRAVASGFMHKYAEGWPKQRYYQGCKYVDEVELIGVELFTKLFGSDFADLRPISGTNANQAVFFGLTQPGDKAIVLHTSHGGHISHMPFGAAGMRGLEVHTWPFDNEEFNIDVDKAEKLIREVEPKIVVFGGSLFPFPHPVKELAPVAKEVGAYVMYDGAHVLGLIAGKQFQDPLREGADIITASTHKTFPGPQGGVIIYKRFGETEEIAKLQWAIFPGVLSNHHLHHMAGKVITAAEMLEYGEKYAAQIVKNAKALAEALAEEGFKVIGEDKGYTESHQVIVDVSDLHPAAGGWAAPLLEEAGIILNKNLLPWDPLEKVNEPSGLRIGVQEMTRVGMMEDEMKEIARFIRRVLIDKEDPAKVRRDVYGFRAEYQKVYYSFDHGLPLRLRE.

122-124 lines the (6S)-5,6,7,8-tetrahydrofolate pocket; the sequence is GHI. At Lys-228 the chain carries N6-(pyridoxal phosphate)lysine. Residue Glu-245 coordinates (6S)-5,6,7,8-tetrahydrofolate.

This sequence belongs to the SHMT family. In terms of assembly, homodimer. It depends on pyridoxal 5'-phosphate as a cofactor.

The protein resides in the cytoplasm. It participates in amino-acid biosynthesis; glycine biosynthesis; glycine from L-serine: step 1/1. Catalyzes the reversible interconversion of serine and glycine with a modified folate serving as the one-carbon carrier. Also exhibits a pteridine-independent aldolase activity toward beta-hydroxyamino acids, producing glycine and aldehydes, via a retro-aldol mechanism. This chain is Serine hydroxymethyltransferase, found in Thermococcus kodakarensis (strain ATCC BAA-918 / JCM 12380 / KOD1) (Pyrococcus kodakaraensis (strain KOD1)).